Reading from the N-terminus, the 361-residue chain is Chorismate synthase (361 aa).

Residues 38-49 (EKDMQHDLDRRR) are compositionally biased toward basic and acidic residues. The segment at 38–58 (EKDMQHDLDRRRPGTSKYTTQ) is disordered. An NADP(+)-binding site is contributed by Arg48. FMN contacts are provided by residues 125 to 127 (RSS), 238 to 239 (NA), Gly278, 293 to 297 (KPTSS), and Arg319.

This sequence belongs to the chorismate synthase family. Homotetramer. The cofactor is FMNH2.

The enzyme catalyses 5-O-(1-carboxyvinyl)-3-phosphoshikimate = chorismate + phosphate. It functions in the pathway metabolic intermediate biosynthesis; chorismate biosynthesis; chorismate from D-erythrose 4-phosphate and phosphoenolpyruvate: step 7/7. In terms of biological role, catalyzes the anti-1,4-elimination of the C-3 phosphate and the C-6 proR hydrogen from 5-enolpyruvylshikimate-3-phosphate (EPSP) to yield chorismate, which is the branch point compound that serves as the starting substrate for the three terminal pathways of aromatic amino acid biosynthesis. This reaction introduces a second double bond into the aromatic ring system. This Photobacterium profundum (strain SS9) protein is Chorismate synthase.